An 805-amino-acid polypeptide reads, in one-letter code: Mitochondrial inner membrane m-AAA protease component AFG3L2 (805 aa).

The N-terminal 39 residues, 1–39, are a transit peptide targeting the mitochondrion; it reads MAHRCLLLWGRGACRPRGMPPMLLPGGRTGSTERLYLRM. The propeptide at 40 to 67 is removed in mature form; it reads LYRYATTQAKTSRNSLLTDVIAAYQRLC. The segment at 74-127 is disordered; it reads FEKYFPNGKNGKKTSEPKEVMGEKKEPKPAAAPRPSGGGVGGGGKRGGKKDDSH. Residues 86 to 101 show a composition bias toward basic and acidic residues; sequence KTSEPKEVMGEKKEPK. The segment covering 109-118 has biased composition (gly residues); sequence SGGGVGGGGK. An N6-succinyllysine modification is found at Lys-118. 2 helical membrane-spanning segments follow: residues 144 to 164 and 252 to 272; these read FKMYFLWTALFWGGFLFYFLF and GSFLLSMLPTVLIIAFLLYTI. Positions 311, 312, 353, 354, 355, 356, 357, and 491 each coordinate ATP. Zn(2+) is bound at residue His-575. Residue Glu-576 is part of the active site. Zn(2+)-binding residues include His-579 and Asp-650. Positions 760–805 are disordered; sequence FVEGTGSLDEDTSLPEGLKDWNREREGSEEPSGEKVTSPVQGAGPA. Over residues 776–787 the composition is skewed to basic and acidic residues; the sequence is GLKDWNREREGS.

This sequence in the N-terminal section; belongs to the AAA ATPase family. The protein in the C-terminal section; belongs to the peptidase M41 family. In terms of assembly, homohexamer. Forms heterohexamers with SPG7. The m-AAA protease is either composed of homohexamers of AFG3L2 or heterohexamers of AFG3L2 and SPG7. Interacts with MAIP1. Interacts with DNAJC19. Interacts with PHB2. The cofactor is Zn(2+). Upon import into the mitochondrion, the N-terminal transit peptide is cleaved to generate an intermediate form which undergoes autocatalytic proteolytic processing to generate the proteolytically active mature form.

Its subcellular location is the mitochondrion inner membrane. It carries out the reaction ATP + H2O = ADP + phosphate + H(+). Functionally, catalytic component of the m-AAA protease, a protease that plays a key role in proteostasis of inner mitochondrial membrane proteins, and which is essential for axonal and neuron development. AFG3L2 possesses both ATPase and protease activities: the ATPase activity is required to unfold substrates, threading them into the internal proteolytic cavity for hydrolysis into small peptide fragments. The m-AAA protease carries out protein quality control in the inner membrane of the mitochondria by mediating degradation of mistranslated or misfolded polypeptides. The m-AAA protease complex also promotes the processing and maturation of mitochondrial proteins, such as MRPL32/bL32m, PINK1 and SP7. Mediates protein maturation of the mitochondrial ribosomal subunit MRPL32/bL32m by catalyzing the cleavage of the presequence of MRPL32/bL32m prior to assembly into the mitochondrial ribosome. Required for SPG7 maturation into its active mature form after SPG7 cleavage by mitochondrial-processing peptidase (MPP). Required for the maturation of PINK1 into its 52kDa mature form after its cleavage by mitochondrial-processing peptidase (MPP). Acts as a regulator of calcium in neurons by mediating degradation of SMDT1/EMRE before its assembly with the uniporter complex, limiting the availability of SMDT1/EMRE for MCU assembly and promoting efficient assembly of gatekeeper subunits with MCU. Promotes the proteolytic degradation of GHITM upon hyperpolarization of mitochondria: progressive GHITM degradation leads to respiratory complex I degradation and broad reshaping of the mitochondrial proteome by AFG3L2. Also acts as a regulator of mitochondrial glutathione homeostasis by mediating cleavage and degradation of SLC25A39. SLC25A39 cleavage is prevented when SLC25A39 binds iron-sulfur. Involved in the regulation of OMA1-dependent processing of OPA1. May act by mediating processing of OMA1 precursor, participating in OMA1 maturation. The sequence is that of Mitochondrial inner membrane m-AAA protease component AFG3L2 (AFG3L2) from Bos taurus (Bovine).